The primary structure comprises 577 residues: Zinc finger-containing ubiquitin peptidase 1 (577 aa).

The C2H2-type 1 zinc-finger motif lies at 2–24 (LSCNICGETVNSEPDMKAHLIVH). The C2H2-type 2; atypical zinc-finger motif lies at 29-52 (IICPFCKLSGINYNEICFHIETVH). Over residues 124 to 137 (ESRKYQKSREKKPG) the composition is skewed to basic and acidic residues. The interval 124 to 145 (ESRKYQKSREKKPGLSEAQGSI) is disordered. The segment at 153-176 (PECPFCGKIEGCSQDMEIHVKTKH) adopts a C2H2-type 3; atypical zinc-finger fold. A C2H2-type 4 zinc finger spans residues 192–214 (YDCPMCGLVCTNYHILQEHVDLH). Positions 225 to 247 (DRVQCSSDRELAHRLQQEEDRKR) are MIU. Positions 238-260 (RLQQEEDRKRKSEESRQEREEFQ) are disordered. A zUBD/ZHA region spans residues 248 to 273 (KSEESRQEREEFQKLQRQYGLDNSGG). Lys-261 bears the N6-acetyllysine mark. Cys-359 acts as the Nucleophile in catalysis. His-490 acts as the Proton acceptor in catalysis. The active site involves Asp-511.

The protein belongs to the peptidase C78 family. ZUFSP subfamily. As to quaternary structure, interacts with RPA1 and RPA2.

It localises to the cytoplasm. The protein localises to the nucleus. The enzyme catalyses Thiol-dependent hydrolysis of ester, thioester, amide, peptide and isopeptide bonds formed by the C-terminal Gly of ubiquitin (a 76-residue protein attached to proteins as an intracellular targeting signal).. Functionally, deubiquitinase with endodeubiquitinase activity that specifically interacts with and cleaves 'Lys-63'-linked long polyubiquitin chains. Shows only weak activity against 'Lys-11' and 'Lys-48'-linked chains. Plays an important role in genome stability pathways, functioning to prevent spontaneous DNA damage and also promote cellular survival in response to exogenous DNA damage. Modulates the ubiquitination status of replication protein A (RPA) complex proteins in response to replication stress. This is Zinc finger-containing ubiquitin peptidase 1 from Mus musculus (Mouse).